A 464-amino-acid chain; its full sequence is Sushi repeat-containing protein SRPX (464 aa).

The signal sequence occupies residues 1-30; it reads MGSPAHRPALLLLLPPLLLLLLLRVPPSRS. Ser34 carries O-linked (Xyl...) (chondroitin sulfate) serine glycosylation. Cystine bridges form between Cys57-Cys85, Cys69-Cys103, Cys89-Cys115, Cys120-Cys161, and Cys147-Cys174. Sushi domains are found at residues 57–117 and 118–176; these read CSPI…ICKQ and KRCP…SCVD. The region spanning 177–259 is the HYR domain; the sequence is MEPPRIKCPS…TCKFRVKVRV (83 aa). A Sushi 3 domain is found at 260–319; the sequence is KRCGKLNAPENGYMKCSSDGDNYGATCEFSCIGGYELQGSPARVCQSNLAWSGTEPTCAA. 2 disulfides stabilise this stretch: Cys262–Cys304 and Cys290–Cys317.

In terms of tissue distribution, detected in fibroblasts (at protein level). Retina and heart; less in placenta, pancreas, lung, liver, skeletal muscle, kidney and brain.

It is found in the cell surface. Its function is as follows. May be involved in phagocytosis during disk shedding, cell adhesion to cells other than the pigment epithelium or signal transduction. The protein is Sushi repeat-containing protein SRPX (SRPX) of Homo sapiens (Human).